The following is a 955-amino-acid chain: 2-oxoglutarate dehydrogenase E1 component (955 aa).

It belongs to the alpha-ketoglutarate dehydrogenase family. As to quaternary structure, homodimer. Part of the 2-oxoglutarate dehydrogenase (OGDH) complex composed of E1 (2-oxoglutarate dehydrogenase), E2 (dihydrolipoamide succinyltransferase) and E3 (dihydrolipoamide dehydrogenase); the complex contains multiple copies of the three enzymatic components (E1, E2 and E3). Requires thiamine diphosphate as cofactor.

It carries out the reaction N(6)-[(R)-lipoyl]-L-lysyl-[protein] + 2-oxoglutarate + H(+) = N(6)-[(R)-S(8)-succinyldihydrolipoyl]-L-lysyl-[protein] + CO2. In terms of biological role, E1 component of the 2-oxoglutarate dehydrogenase (OGDH) complex which catalyzes the decarboxylation of 2-oxoglutarate, the first step in the conversion of 2-oxoglutarate to succinyl-CoA and CO(2). This chain is 2-oxoglutarate dehydrogenase E1 component, found in Bacillus cereus (strain AH187).